We begin with the raw amino-acid sequence, 227 residues long: tRNA (guanine-N(1)-)-methyltransferase (227 aa).

S-adenosyl-L-methionine is bound by residues G112 and L131–L136.

The protein belongs to the RNA methyltransferase TrmD family. In terms of assembly, homodimer.

The protein resides in the cytoplasm. The enzyme catalyses guanosine(37) in tRNA + S-adenosyl-L-methionine = N(1)-methylguanosine(37) in tRNA + S-adenosyl-L-homocysteine + H(+). Its function is as follows. Specifically methylates guanosine-37 in various tRNAs. In Trichodesmium erythraeum (strain IMS101), this protein is tRNA (guanine-N(1)-)-methyltransferase.